Reading from the N-terminus, the 450-residue chain is MKNIASFANKKVLVLGLAKSGESAARLLDKLGAIVTVNDGKPFEENPAAQSLLEEGIKVVTGGHPLELLDENFELMVKNPGIPYNNAMVIRALEKKIPVITEVELAYLISEAPIIGITGSNGKTTTTTMIAQVLTAGGQNGLLSGNIGFPASQVAQSACGKDTLVMELSSFQLMGIEAFHPQIAVITNLMPTHLDYHGSFEEYAAAKWNIQKNMTADDYLVLNFNQDWAKGMASQTQATVVPFSTTEKVDGAYLDGDVLTFRGEAIIKVAEIGVPGSHNVENALATIAVAKLRGIDNQTIKEVLSAFGGVKHRLQYVGQVNEVAFYNDSKSTNILATQKALSGFDNSKVILIAGGLDRGNEFDELVPDLKGLKKMVILGQSAPRVKRAADQAGVSYLDATDVRDAAHKAFALAEPGDIVLLSPANASWDMYSNFEVRGDEFLVAFEELKG.

119 to 125 (GSNGKTT) provides a ligand contact to ATP.

This sequence belongs to the MurCDEF family.

The protein localises to the cytoplasm. The enzyme catalyses UDP-N-acetyl-alpha-D-muramoyl-L-alanine + D-glutamate + ATP = UDP-N-acetyl-alpha-D-muramoyl-L-alanyl-D-glutamate + ADP + phosphate + H(+). The protein operates within cell wall biogenesis; peptidoglycan biosynthesis. In terms of biological role, cell wall formation. Catalyzes the addition of glutamate to the nucleotide precursor UDP-N-acetylmuramoyl-L-alanine (UMA). The sequence is that of UDP-N-acetylmuramoylalanine--D-glutamate ligase from Streptococcus gordonii (strain Challis / ATCC 35105 / BCRC 15272 / CH1 / DL1 / V288).